Here is a 488-residue protein sequence, read N- to C-terminus: GlcNAc-binding protein A (488 aa).

Positions 1–24 are cleaved as a signal peptide; that stretch reads MIMIITKKTLLPVTLALFSSGVMA. Residues 25-202 enclose the Chitin-binding type-4 domain; that stretch reads HGYVSSVEGG…SFYNVIDVMF (178 aa). Residues 439–480 form the Chitin-binding type-3 domain; it reads AGSKVLATDGRIYECKPFPYSGYCIQWSPSATQFEPGVGSDW.

The protein belongs to the GbpA family.

The protein resides in the secreted. Functionally, probably interacts with GlcNAc residues. May promote attachment to both epithelial cell surfaces and chitin. This is GlcNAc-binding protein A from Photobacterium profundum (strain SS9).